The chain runs to 245 residues: MGPAFASAALALSEALNLPSSGEADFVLQVGTEGLQLQELGPHAPGPLSVDFVRGPLAHRRLQGGGSGQMIAKAVGIQPGVRPDVLDATAGLGRDAFVLAQLGCNVRLIERHPVIAALLADGLQRARLDPDVRPIIERMHLQTGDAIQLMNAWEGDPPQVIYVDPMFPHREKSSLVKKEMSMLRPLVGDDLDASSLLEAALKLATHRVVVKRPRKAPSVLGPKVGYVLEGKSSRFDIYPKRSLKP.

S-adenosyl-L-methionine-binding positions include 94–95, 110–111, and aspartate 164; these read RD and ER.

The protein belongs to the methyltransferase superfamily. RsmJ family.

It is found in the cytoplasm. It carries out the reaction guanosine(1516) in 16S rRNA + S-adenosyl-L-methionine = N(2)-methylguanosine(1516) in 16S rRNA + S-adenosyl-L-homocysteine + H(+). Its function is as follows. Specifically methylates the guanosine in position 1516 of 16S rRNA. This chain is Ribosomal RNA small subunit methyltransferase J, found in Dechloromonas aromatica (strain RCB).